The sequence spans 510 residues: ATP synthase subunit alpha (510 aa).

ATP is bound at residue 169-176 (GDRQTGKT).

Belongs to the ATPase alpha/beta chains family. F-type ATPases have 2 components, CF(1) - the catalytic core - and CF(0) - the membrane proton channel. CF(1) has five subunits: alpha(3), beta(3), gamma(1), delta(1), epsilon(1). CF(0) has three main subunits: a(1), b(2) and c(9-12). The alpha and beta chains form an alternating ring which encloses part of the gamma chain. CF(1) is attached to CF(0) by a central stalk formed by the gamma and epsilon chains, while a peripheral stalk is formed by the delta and b chains.

Its subcellular location is the cell inner membrane. The enzyme catalyses ATP + H2O + 4 H(+)(in) = ADP + phosphate + 5 H(+)(out). In terms of biological role, produces ATP from ADP in the presence of a proton gradient across the membrane. The alpha chain is a regulatory subunit. The sequence is that of ATP synthase subunit alpha from Afipia carboxidovorans (strain ATCC 49405 / DSM 1227 / KCTC 32145 / OM5) (Oligotropha carboxidovorans).